We begin with the raw amino-acid sequence, 690 residues long: Translation factor GUF1, mitochondrial (690 aa).

Residues 40–68 (SVTVPAARRHNSTKSTNSTTSTNSTTATS) are disordered. The segment covering 52 to 68 (TKSTNSTTSTNSTTATS) has biased composition (low complexity). A tr-type G domain is found at 89–272 (ERYRNFCIVA…AVIKKMPAPV (184 aa)). Residues 98–105 (AHIDHGKS), 165–169 (DTPGH), and 219–222 (NKID) contribute to the GTP site.

It belongs to the TRAFAC class translation factor GTPase superfamily. Classic translation factor GTPase family. LepA subfamily.

It localises to the mitochondrion inner membrane. It carries out the reaction GTP + H2O = GDP + phosphate + H(+). In terms of biological role, promotes mitochondrial protein synthesis. May act as a fidelity factor of the translation reaction, by catalyzing a one-codon backward translocation of tRNAs on improperly translocated ribosomes. Binds to mitochondrial ribosomes in a GTP-dependent manner. The sequence is that of Translation factor GUF1, mitochondrial from Sordaria macrospora (strain ATCC MYA-333 / DSM 997 / K(L3346) / K-hell).